Here is a 1116-residue protein sequence, read N- to C-terminus: Surface layer protein (1116 aa).

A signal peptide spans 1–53; the sequence is MQDSGFKKKDRSTNIPQEQFVYTRGGEHKVMKKVVNSVLASALAITVAPMAFA. SLH domains follow at residues 54–117, 118–181, and 182–231; these read AEDT…KLAQ, FNTT…RGVW, and PNSM…YGTD.

It localises to the secreted. The protein localises to the cell wall. The protein resides in the S-layer. This Brevibacillus choshinensis protein is Surface layer protein.